The following is a 507-amino-acid chain: ATP synthase subunit alpha, chloroplastic (507 aa).

170-177 lines the ATP pocket; sequence GDRQTGKT.

Belongs to the ATPase alpha/beta chains family. In terms of assembly, F-type ATPases have 2 components, CF(1) - the catalytic core - and CF(0) - the membrane proton channel. CF(1) has five subunits: alpha(3), beta(3), gamma(1), delta(1), epsilon(1). CF(0) has four main subunits: a, b, b' and c.

It is found in the plastid. The protein resides in the chloroplast thylakoid membrane. The enzyme catalyses ATP + H2O + 4 H(+)(in) = ADP + phosphate + 5 H(+)(out). Produces ATP from ADP in the presence of a proton gradient across the membrane. The alpha chain is a regulatory subunit. The polypeptide is ATP synthase subunit alpha, chloroplastic (Cycas taitungensis (Prince sago)).